We begin with the raw amino-acid sequence, 967 residues long: RNA polymerase-associated protein RapA (967 aa).

Positions 163–333 (EVGQRHAPRV…FARLRLLDPN (171 aa)) constitute a Helicase ATP-binding domain. Residue 176 to 183 (DEVGLGKT) participates in ATP binding. Positions 279–282 (DEAH) match the DEAH box motif. The region spanning 489–643 (RVEWLLNYLT…TCPTGRTIYD (155 aa)) is the Helicase C-terminal domain.

This sequence belongs to the SNF2/RAD54 helicase family. RapA subfamily. As to quaternary structure, interacts with the RNAP. Has a higher affinity for the core RNAP than for the holoenzyme. Its ATPase activity is stimulated by binding to RNAP.

Transcription regulator that activates transcription by stimulating RNA polymerase (RNAP) recycling in case of stress conditions such as supercoiled DNA or high salt concentrations. Probably acts by releasing the RNAP, when it is trapped or immobilized on tightly supercoiled DNA. Does not activate transcription on linear DNA. Probably not involved in DNA repair. This Pectobacterium carotovorum subsp. carotovorum (strain PC1) protein is RNA polymerase-associated protein RapA.